A 660-amino-acid polypeptide reads, in one-letter code: Bifunctional polymyxin resistance protein ArnA (660 aa).

A formyltransferase ArnAFT region spans residues 1–304; the sequence is MKAIVFAYHD…EMGIVTDVRV (304 aa). His104 (proton donor; for formyltransferase activity) is an active-site residue. Residues Arg114 and 136–140 contribute to the (6R)-10-formyltetrahydrofolate site; that span reads TAKAD. Residues 314–660 form a dehydrogenase ArnADH region; that stretch reads RRQRVLILGV…RGAVEELGNK (347 aa). Residues Asp347 and 368–369 contribute to the NAD(+) site; that span reads DV. UDP-alpha-D-glucuronate-binding positions include Ala393, Tyr398, and 432-433; that span reads TS. Catalysis depends on Glu434, which acts as the Proton acceptor; for decarboxylase activity. Residues Arg460, Asn492, 526–535, and Tyr613 contribute to the UDP-alpha-D-glucuronate site; that span reads KLVDGGEQKR. The active-site Proton donor; for decarboxylase activity is the Arg619.

In the N-terminal section; belongs to the Fmt family. UDP-L-Ara4N formyltransferase subfamily. The protein in the C-terminal section; belongs to the NAD(P)-dependent epimerase/dehydratase family. UDP-glucuronic acid decarboxylase subfamily. As to quaternary structure, homohexamer, formed by a dimer of trimers.

It carries out the reaction UDP-alpha-D-glucuronate + NAD(+) = UDP-beta-L-threo-pentopyranos-4-ulose + CO2 + NADH. It catalyses the reaction UDP-4-amino-4-deoxy-beta-L-arabinose + (6R)-10-formyltetrahydrofolate = UDP-4-deoxy-4-formamido-beta-L-arabinose + (6S)-5,6,7,8-tetrahydrofolate + H(+). The protein operates within nucleotide-sugar biosynthesis; UDP-4-deoxy-4-formamido-beta-L-arabinose biosynthesis; UDP-4-deoxy-4-formamido-beta-L-arabinose from UDP-alpha-D-glucuronate: step 1/3. It participates in nucleotide-sugar biosynthesis; UDP-4-deoxy-4-formamido-beta-L-arabinose biosynthesis; UDP-4-deoxy-4-formamido-beta-L-arabinose from UDP-alpha-D-glucuronate: step 3/3. It functions in the pathway bacterial outer membrane biogenesis; lipopolysaccharide biosynthesis. In terms of biological role, bifunctional enzyme that catalyzes the oxidative decarboxylation of UDP-glucuronic acid (UDP-GlcUA) to UDP-4-keto-arabinose (UDP-Ara4O) and the addition of a formyl group to UDP-4-amino-4-deoxy-L-arabinose (UDP-L-Ara4N) to form UDP-L-4-formamido-arabinose (UDP-L-Ara4FN). The modified arabinose is attached to lipid A and is required for resistance to polymyxin and cationic antimicrobial peptides. This is Bifunctional polymyxin resistance protein ArnA from Proteus mirabilis (strain HI4320).